A 366-amino-acid chain; its full sequence is Alanine racemase (366 aa).

The active-site Proton acceptor; specific for D-alanine is Lys40. At Lys40 the chain carries N6-(pyridoxal phosphate)lysine. Arg136 provides a ligand contact to substrate. Tyr263 acts as the Proton acceptor; specific for L-alanine in catalysis. Residue Met310 participates in substrate binding.

Belongs to the alanine racemase family. The cofactor is pyridoxal 5'-phosphate.

It carries out the reaction L-alanine = D-alanine. The protein operates within amino-acid biosynthesis; D-alanine biosynthesis; D-alanine from L-alanine: step 1/1. Its function is as follows. Catalyzes the interconversion of L-alanine and D-alanine. May also act on other amino acids. The protein is Alanine racemase (alr) of Streptococcus agalactiae serotype Ia (strain ATCC 27591 / A909 / CDC SS700).